A 265-amino-acid chain; its full sequence is Glutamate racemase (265 aa).

Substrate contacts are provided by residues 7 to 8 and 39 to 40; these read DS and YG. Cys-70 acts as the Proton donor/acceptor in catalysis. Substrate is bound at residue 71–72; it reads NT. Cys-177 functions as the Proton donor/acceptor in the catalytic mechanism.

The protein belongs to the aspartate/glutamate racemases family.

It carries out the reaction L-glutamate = D-glutamate. The protein operates within cell wall biogenesis; peptidoglycan biosynthesis. Functionally, provides the (R)-glutamate required for cell wall biosynthesis. This is Glutamate racemase from Prochlorococcus marinus (strain NATL1A).